Here is a 224-residue protein sequence, read N- to C-terminus: Phosphoribosylformylglycinamidine synthase subunit PurQ (224 aa).

The Glutamine amidotransferase type-1 domain occupies 4-224 (RIGVITFPGT…YSALDSVLAS (221 aa)). Cys-87 acts as the Nucleophile in catalysis. Catalysis depends on residues His-195 and Glu-197.

In terms of assembly, part of the FGAM synthase complex composed of 1 PurL, 1 PurQ and 2 PurS subunits.

It localises to the cytoplasm. It carries out the reaction N(2)-formyl-N(1)-(5-phospho-beta-D-ribosyl)glycinamide + L-glutamine + ATP + H2O = 2-formamido-N(1)-(5-O-phospho-beta-D-ribosyl)acetamidine + L-glutamate + ADP + phosphate + H(+). The catalysed reaction is L-glutamine + H2O = L-glutamate + NH4(+). It functions in the pathway purine metabolism; IMP biosynthesis via de novo pathway; 5-amino-1-(5-phospho-D-ribosyl)imidazole from N(2)-formyl-N(1)-(5-phospho-D-ribosyl)glycinamide: step 1/2. Functionally, part of the phosphoribosylformylglycinamidine synthase complex involved in the purines biosynthetic pathway. Catalyzes the ATP-dependent conversion of formylglycinamide ribonucleotide (FGAR) and glutamine to yield formylglycinamidine ribonucleotide (FGAM) and glutamate. The FGAM synthase complex is composed of three subunits. PurQ produces an ammonia molecule by converting glutamine to glutamate. PurL transfers the ammonia molecule to FGAR to form FGAM in an ATP-dependent manner. PurS interacts with PurQ and PurL and is thought to assist in the transfer of the ammonia molecule from PurQ to PurL. In Mycobacterium leprae (strain TN), this protein is Phosphoribosylformylglycinamidine synthase subunit PurQ.